The sequence spans 442 residues: UDP-N-acetylmuramoylalanine--D-glutamate ligase (442 aa).

Residue 115 to 121 (GSNGKST) participates in ATP binding.

The protein belongs to the MurCDEF family.

The protein resides in the cytoplasm. The enzyme catalyses UDP-N-acetyl-alpha-D-muramoyl-L-alanine + D-glutamate + ATP = UDP-N-acetyl-alpha-D-muramoyl-L-alanyl-D-glutamate + ADP + phosphate + H(+). The protein operates within cell wall biogenesis; peptidoglycan biosynthesis. Functionally, cell wall formation. Catalyzes the addition of glutamate to the nucleotide precursor UDP-N-acetylmuramoyl-L-alanine (UMA). The protein is UDP-N-acetylmuramoylalanine--D-glutamate ligase of Aliivibrio salmonicida (strain LFI1238) (Vibrio salmonicida (strain LFI1238)).